We begin with the raw amino-acid sequence, 228 residues long: MRILAVDDDRAVRESLRRSLSFNGYSVELANDGVEALEMVARDRPDALVLDVMMPRLDGLEVCRQLRSTGDDLPILVLTARDSVSERVAGLDAGADDYLPKPFALEELLARIRALLRRTKPDDAAESVAMSFSDLTLDPVTREVARGQRWISLTRTEFALLEMLIANPRRVLTRSRILEEVWGFDFPTSGNALEVYVGYLRRKTEADGESRLIHTVRGVGYVLRETPP.

The Response regulatory domain occupies 2 to 116 (RILAVDDDRA…ELLARIRALL (115 aa)). D46 is subject to 4-aspartylphosphate. The segment at residues 127–225 (SVAMSFSDLT…VRGVGYVLRE (99 aa)) is a DNA-binding region (ompR/PhoB-type).

In terms of processing, phosphorylated and dephosphorylated by MprB.

The protein localises to the cytoplasm. Functionally, member of the two-component regulatory system MprB/MprA which contributes to maintaining a balance among several systems involved in stress resistance and is required for establishment and maintenance of persistent infection in the host. Functions as a transcriptional regulator that recognizes a 19-bp nucleotide motif comprizing two loosely conserved 8-bp direct DNA-binding motif repeats separated by a 3-bp spacer region. The chain is Response regulator MprA (mprA) from Mycobacterium leprae (strain TN).